Consider the following 254-residue polypeptide: Bidirectional sugar transporter SWEET6b (254 aa).

Residues 1 to 9 (MISPDAARN) are Extracellular-facing. Residues 10 to 30 (VVGIIGNVISFGLFLAPVPTF) form a helical membrane-spanning segment. The 89-residue stretch at 10 to 98 (VVGIIGNVIS…IFFLYSPNKK (89 aa)) folds into the MtN3/slv 1 domain. Residues 31–45 (WRICKRKDVEEFKAD) are Cytoplasmic-facing. A helical membrane pass occupies residues 46-66 (PYLATLLNCMLWVFYGIPIVH). At 67–69 (PNS) the chain is on the extracellular side. The helical transmembrane segment at 70 to 90 (ILVVTINGIGLVVEGTYLFIF) threads the bilayer. The Cytoplasmic portion of the chain corresponds to 91–101 (FLYSPNKKRLR). The chain crosses the membrane as a helical span at residues 102–122 (MLAVLGVELVFMLAVILGVLL). The Extracellular portion of the chain corresponds to 123–131 (GAHTHKKRS). A helical membrane pass occupies residues 132-152 (MIVGILCVFFGSIMYFSPLTI). The MtN3/slv 2 domain maps to 133–216 (IVGILCVFFG…LILYACYYRT (84 aa)). Residues 153–165 (MGKVIKTKSVEYM) are Cytoplasmic-facing. A helical membrane pass occupies residues 166-186 (PFFLSLVCFLNGVCWTAYALI). Topologically, residues 187 to 189 (RFD) are extracellular. The chain crosses the membrane as a helical span at residues 190–210 (IYVTIPNSLGAIFGAIQLILY). Topologically, residues 211–254 (ACYYRTTPKKTKAAKDVEMPSVISGPGAAATASGGSVVSVTVER) are cytoplasmic.

It belongs to the SWEET sugar transporter family. In terms of assembly, forms homooligomers and/or heterooligomers.

Its subcellular location is the cell membrane. Mediates both low-affinity uptake and efflux of sugar across the plasma membrane. This Oryza sativa subsp. indica (Rice) protein is Bidirectional sugar transporter SWEET6b (SWEET6B).